Consider the following 842-residue polypeptide: Glycogen phosphorylase, muscle form (842 aa).

An N-acetylserine modification is found at Ser2. Ser15 bears the Phosphoserine; by PHK; in form phosphorylase A mark. The AMP site is built by Asp43 and Tyr76. Phosphotyrosine is present on residues Tyr204 and Tyr227. Arg310–Cys319 lines the AMP pocket. Ser430 carries the post-translational modification Phosphoserine. Tyr473 is modified (phosphotyrosine). The residue at position 514 (Ser514) is a Phosphoserine. Lys681 bears the N6-(pyridoxal phosphate)lysine mark. Phosphoserine occurs at positions 747 and 748.

The protein belongs to the glycogen phosphorylase family. As to quaternary structure, homodimer. Homotetramer; to form the enzymatically active phosphorylase A. Pyridoxal 5'-phosphate serves as cofactor. Post-translationally, phosphorylation of Ser-15 converts phosphorylase B (unphosphorylated) to phosphorylase A.

The enzyme catalyses [(1-&gt;4)-alpha-D-glucosyl](n) + phosphate = [(1-&gt;4)-alpha-D-glucosyl](n-1) + alpha-D-glucose 1-phosphate. Its activity is regulated as follows. Allosterically regulated through the non-covalent binding of metabolites, being activated by AMP and inhibited by ATP, ADP, and glucose-6-phosphate. The activity is also controlled by post-translational modifications including phosphorylation. In terms of biological role, allosteric enzyme that catalyzes the rate-limiting step in glycogen catabolism, the phosphorolytic cleavage of glycogen to produce glucose-1-phosphate, and plays a central role in maintaining cellular and organismal glucose homeostasis. This is Glycogen phosphorylase, muscle form from Homo sapiens (Human).